Reading from the N-terminus, the 507-residue chain is ATP synthase subunit alpha (507 aa).

168–175 (GDRKTGKT) contacts ATP.

This sequence belongs to the ATPase alpha/beta chains family. In terms of assembly, F-type ATPases have 2 components, CF(1) - the catalytic core - and CF(0) - the membrane proton channel. CF(1) has five subunits: alpha(3), beta(3), gamma(1), delta(1), epsilon(1). CF(0) has three main subunits: a(1), b(2) and c(9-12). The alpha and beta chains form an alternating ring which encloses part of the gamma chain. CF(1) is attached to CF(0) by a central stalk formed by the gamma and epsilon chains, while a peripheral stalk is formed by the delta and b chains.

The protein resides in the cell inner membrane. The catalysed reaction is ATP + H2O + 4 H(+)(in) = ADP + phosphate + 5 H(+)(out). In terms of biological role, produces ATP from ADP in the presence of a proton gradient across the membrane. The alpha chain is a regulatory subunit. This is ATP synthase subunit alpha from Ehrlichia ruminantium (strain Gardel).